A 110-amino-acid polypeptide reads, in one-letter code: Small ribosomal subunit protein eS25 (110 aa).

The interval 1 to 38 is disordered; it reads MGGKKKPTLSQLAKKAEKEKAQQAQKAKKEVKKEETPA. A compositionally biased stretch (basic and acidic residues) spans 14–38; sequence KKAEKEKAQQAQKAKKEVKKEETPA.

Belongs to the eukaryotic ribosomal protein eS25 family.

The polypeptide is Small ribosomal subunit protein eS25 (rps25e) (Pyrobaculum aerophilum (strain ATCC 51768 / DSM 7523 / JCM 9630 / CIP 104966 / NBRC 100827 / IM2)).